We begin with the raw amino-acid sequence, 527 residues long: D-3-phosphoglycerate dehydrogenase (527 aa).

NAD(+) is bound by residues 149–150 (RV), Asp-169, 228–230 (AAR), and Asp-254. Residue Arg-230 is part of the active site. Residue Glu-259 is part of the active site. The active-site Proton donor is His-278. 278–281 (HIAA) contacts NAD(+). Positions 453 to 527 (YIISLHEDKP…GIIDATYVEL (75 aa)) constitute an ACT domain.

This sequence belongs to the D-isomer specific 2-hydroxyacid dehydrogenase family.

The catalysed reaction is (2R)-3-phosphoglycerate + NAD(+) = 3-phosphooxypyruvate + NADH + H(+). The protein operates within amino-acid biosynthesis; L-serine biosynthesis; L-serine from 3-phospho-D-glycerate: step 1/3. This is D-3-phosphoglycerate dehydrogenase (serA) from Archaeoglobus fulgidus (strain ATCC 49558 / DSM 4304 / JCM 9628 / NBRC 100126 / VC-16).